Consider the following 487-residue polypeptide: Glycogen synthase (487 aa).

K23 contacts ADP-alpha-D-glucose.

The protein belongs to the glycosyltransferase 1 family. Bacterial/plant glycogen synthase subfamily.

The enzyme catalyses [(1-&gt;4)-alpha-D-glucosyl](n) + ADP-alpha-D-glucose = [(1-&gt;4)-alpha-D-glucosyl](n+1) + ADP + H(+). Its pathway is glycan biosynthesis; glycogen biosynthesis. Functionally, synthesizes alpha-1,4-glucan chains using ADP-glucose. The chain is Glycogen synthase from Pseudomonas fluorescens (strain Pf0-1).